The following is a 386-amino-acid chain: uncharacterized protein (386 aa).

The region spanning 29–76 (KYWKFLNEDCKIEVLKYLDYCSRCQLSICSKSDHKLVSITPLYVYEIE) is the F-box domain.

This is an uncharacterized protein from Caenorhabditis elegans.